We begin with the raw amino-acid sequence, 29 residues long: Cytochrome b6-f complex subunit 8 (29 aa).

A helical membrane pass occupies residues 3–23 (IVSLAWAVLMVVFTFSLSLVV).

It belongs to the PetN family. The 4 large subunits of the cytochrome b6-f complex are cytochrome b6, subunit IV (17 kDa polypeptide, PetD), cytochrome f and the Rieske protein, while the 4 small subunits are PetG, PetL, PetM and PetN. The complex functions as a dimer.

The protein localises to the plastid. It is found in the chloroplast thylakoid membrane. Its function is as follows. Component of the cytochrome b6-f complex, which mediates electron transfer between photosystem II (PSII) and photosystem I (PSI), cyclic electron flow around PSI, and state transitions. This is Cytochrome b6-f complex subunit 8 from Drimys granadensis.